Reading from the N-terminus, the 541-residue chain is Man(5)GlcNAc(2)-PP-dolichol translocation protein RFT1 (541 aa).

Transmembrane regions (helical) follow at residues 16 to 36 (SGLL…AFIL), 45 to 62 (GIVN…TFLA), 85 to 105 (LLWL…WVWL), 123 to 143 (VLFF…WVLA), 154 to 176 (LAES…WLPH), 187 to 207 (LLYT…LLRS), 335 to 355 (LALL…QLAL), 376 to 396 (CLYV…FAAM), 414 to 434 (SFLV…FIMA), 470 to 490 (VLLG…AFLC), and 499 to 519 (LAHI…AFLT).

It belongs to the RFT1 family.

The protein localises to the endoplasmic reticulum membrane. The protein operates within protein modification; protein glycosylation. Intramembrane glycolipid transporter that operates in the biosynthetic pathway of dolichol-linked oligosaccharides, the glycan precursors employed in protein asparagine (N)-glycosylation. The sequential addition of sugars to dolichol pyrophosphate produces dolichol-linked oligosaccharides containing fourteen sugars, including two GlcNAcs, nine mannoses and three glucoses. Once assembled, the oligosaccharide is transferred from the lipid to nascent proteins by oligosaccharyltransferases. The assembly of dolichol-linked oligosaccharides begins on the cytosolic side of the endoplasmic reticulum membrane and finishes in its lumen. RFT1 could mediate the translocation of the cytosolically oriented intermediate DolPP-GlcNAc2Man5, produced by ALG11, into the ER lumen where dolichol-linked oligosaccharides assembly continues. However, the intramembrane lipid transporter activity could not be confirmed in vitro. This chain is Man(5)GlcNAc(2)-PP-dolichol translocation protein RFT1, found in Mus musculus (Mouse).